A 189-amino-acid polypeptide reads, in one-letter code: Endoribonuclease YbeY (189 aa).

Positions 1–10 (MKERSSSPGT) are enriched in polar residues. Residues 1–23 (MKERSSSPGTPDSGRRARPKPAK) form a disordered region. Residues His-141, His-145, and His-151 each coordinate Zn(2+).

It belongs to the endoribonuclease YbeY family. It depends on Zn(2+) as a cofactor.

It localises to the cytoplasm. Its function is as follows. Single strand-specific metallo-endoribonuclease involved in late-stage 70S ribosome quality control and in maturation of the 3' terminus of the 16S rRNA. The polypeptide is Endoribonuclease YbeY (Nitrosospira multiformis (strain ATCC 25196 / NCIMB 11849 / C 71)).